Here is a 715-residue protein sequence, read N- to C-terminus: Bromodomain-containing protein DDB_G0278469 (715 aa).

2 disordered regions span residues 18-46 (EDNNNNNNNNNNKENINNDDNNINPNRNA) and 186-425 (QQQK…ETKQ). 5 stretches are compositionally biased toward low complexity: residues 20 to 45 (NNNNNNNNNNKENINNDDNNINPNRN), 186 to 204 (QQQKQQQQQQQQQQAPTAQ), 215 to 227 (LTAATTTPTTTTT), 234 to 254 (TAPPTTVASSSTIPKTTTTKK), and 261 to 281 (SKSNLKSSQNKLSTTTTTTIT). Over residues 307–316 (KPKEQKKDIM) the composition is skewed to basic and acidic residues. A coiled-coil region spans residues 322–368 (SKKANTHEEKEEGESEEEEEEEEEEEEEEEEEEEEEQLEDKQKQTKT). The segment covering 332–359 (EEGESEEEEEEEEEEEEEEEEEEEEEQL) has biased composition (acidic residues). Residues 366-389 (TKTPISQNKSASSNIKPLSKTSKS) are compositionally biased toward polar residues. Residues 405 to 414 (KKITSTTVTR) are compositionally biased toward low complexity. The stretch at 437–470 (KQQTQEEIEQELKLESIRKRIEQFINKFEKEIND) forms a coiled coil. Residues 474 to 599 (KDLDEGKRKI…IQFYKSLLET (126 aa)) form the Bromo domain. Positions 653-715 (LVDEDEDECL…SEEEDQEATN (63 aa)) are disordered. The span at 662–672 (LNNQNNPTTYD) shows a compositional bias: polar residues. Acidic residues predominate over residues 684 to 715 (QESDEESDEESDEESDEERDQLSEEEDQEATN).

This chain is Bromodomain-containing protein DDB_G0278469, found in Dictyostelium discoideum (Social amoeba).